The following is a 256-amino-acid chain: UPF0246 protein Swoo_1284 (256 aa).

It belongs to the UPF0246 family.

The chain is UPF0246 protein Swoo_1284 from Shewanella woodyi (strain ATCC 51908 / MS32).